The following is a 35-amino-acid chain: MSDIN-like toxin proprotein 6 (35 aa).

A propeptide spanning residues 1 to 10 (MSDINTTRLP) is cleaved from the precursor. Positions 11–18 (FVFVASPP) form a cross-link, cyclopeptide (Phe-Pro). A propeptide spanning residues 19 to 35 (CVGDDIAMVLTRGENLC) is cleaved from the precursor.

The protein belongs to the MSDIN fungal toxin family. Processed by the macrocyclase-peptidase enzyme POPB to yield a toxic cyclic octapeptide. POPB first removes 10 residues from the N-terminus. Conformational trapping of the remaining peptide forces the enzyme to release this intermediate rather than proceed to macrocyclization. The enzyme rebinds the remaining peptide in a different conformation and catalyzes macrocyclization of the N-terminal 8 residues. As to expression, expressed in basidiocarps.

In terms of biological role, probable toxin that belongs to the MSDIN-like toxin family responsible for a large number of food poisoning cases and deaths. The chain is MSDIN-like toxin proprotein 6 from Amanita exitialis (Guangzhou destroying angel).